Here is a 406-residue protein sequence, read N- to C-terminus: Phosphorylase b kinase gamma catalytic chain, liver/testis isoform (406 aa).

The region spanning 24–291 is the Protein kinase domain; it reads YDPKDVIGRG…AEQALQHPFF (268 aa). Residues 30–38 and Lys-53 each bind ATP; that span reads IGRGVSSVV. Catalysis depends on Asp-153, which acts as the Proton acceptor. A calmodulin-binding (domain-N) region spans residues 306–330; the sequence is QRFRVAVWTVLAAGRVALSAHRIRP. Positions 346-370 are calmodulin-binding (domain-C); it reads VRRLIDNCAFRLYGHWVKKGEQQNR.

Belongs to the protein kinase superfamily. CAMK Ser/Thr protein kinase family. In terms of assembly, hexadecamer of 4 heterotetramers, each composed of alpha, beta, gamma, and delta subunits. Alpha (PHKA1 or PHKA2) and beta (PHKB) are regulatory subunits, gamma (PHKG1 or PHKG2) is the catalytic subunit, and delta is calmodulin.

The catalysed reaction is 2 ATP + phosphorylase b = 2 ADP + phosphorylase a.. In terms of biological role, catalytic subunit of the phosphorylase b kinase (PHK), which mediates the neural and hormonal regulation of glycogen breakdown (glycogenolysis) by phosphorylating and thereby activating glycogen phosphorylase. May regulate glycogeneolysis in the testis. In vitro, phosphorylates PYGM. In Bos taurus (Bovine), this protein is Phosphorylase b kinase gamma catalytic chain, liver/testis isoform (PHKG2).